Here is a 304-residue protein sequence, read N- to C-terminus: Prephenate dehydratase (304 aa).

The Prephenate dehydratase domain maps to 3 to 178; the sequence is RIAYFGPVGT…ARTRFLLMRR (176 aa). One can recognise an ACT domain in the interval 193-271; the sequence is SIVAAAANRT…DVRFLGSFAR (79 aa).

It carries out the reaction prephenate + H(+) = 3-phenylpyruvate + CO2 + H2O. It participates in amino-acid biosynthesis; L-phenylalanine biosynthesis; phenylpyruvate from prephenate: step 1/1. The sequence is that of Prephenate dehydratase (pheA) from Amycolatopsis methanolica.